The primary structure comprises 1556 residues: Bromodomain adjacent to zinc finger domain protein 1A (1556 aa).

The tract at residues M1–N128 is required for interaction with the CHRAC1-POLE3 heterodimer. Required for interaction with the CHRAC1-POLE3 heterodimer. The tract at residues M1–Q133 is required for interaction with NCOR1. The region spanning E22–N128 is the WAC domain. The residue at position 270 (S270) is a Phosphoserine. Residues K306–K397 adopt a coiled-coil conformation. The 66-residue stretch at P422–E487 folds into the DDT domain. The stretch at I634–E709 forms a coiled coil. The span at E662–R695 shows a compositional bias: basic and acidic residues. 3 disordered regions span residues E662 to K754, P841 to D877, and F941 to P966. The segment at I667–L933 is required for interaction with SMARCA5 and formation of the CHRAC ISWI chromatin remodeling complex. A Phosphoserine modification is found at S702. Over residues I703–T713 the composition is skewed to acidic residues. A compositionally biased stretch (basic and acidic residues) spans I715–D726. Over residues Q727–D736 the composition is skewed to acidic residues. Phosphothreonine is present on T731. Polar residues-rich tracts occupy residues S842–D872 and S951–D965. A Glycyl lysine isopeptide (Lys-Gly) (interchain with G-Cter in SUMO2) cross-link involves residue K952. Phosphoserine occurs at positions 960 and 961. A PHD-type zinc finger spans residues N1148–K1198. Disordered stretches follow at residues R1202–N1376 and L1399–G1431. A compositionally biased stretch (acidic residues) spans E1213–V1258. Positions K1262–G1276 are enriched in basic residues. Over residues K1277–G1312 the composition is skewed to polar residues. S1281, S1320, S1339, S1353, S1363, S1371, S1402, S1413, and S1417 each carry phosphoserine. Polar residues predominate over residues S1363–F1374. Positions G1430 to L1533 constitute a Bromo domain. At T1547 the chain carries Phosphothreonine.

It belongs to the WAL family. As to quaternary structure, component of the ACF-1 ISWI chromatin remodeling complex at least composed of SMARCA1 and BAZ1A, which regulates the spacing of histone octamers on the DNA template to facilitate access to DNA. Within the ACF-1 ISWI chromatin remodeling complex interacts with SMARCA1; the interaction is direct. Component of the ACF-5 ISWI chromatin remodeling complex (also called the ACF complex) at least composed of BAZ1A and SMARCA5/SNF2H, which regulates the spacing of histone octamers on the DNA template to facilitate access to DNA. Within the ACF-5 ISWI chromatin remodeling complex interacts with SMARCA5/SNF2H; the interaction is direct. Component of the CHRAC ISWI chromatin remodeling complex at least composed of SMARCA5/SNF2H, BAZ1A/ACF1, CHRAC1 and POLE3; the complex preferentially binds DNA through the CHRAC1-POLE3 heterodimer and possesses ATP-dependent nucleosome-remodeling activity. Within the complex interacts (via N-terminus) with POLE3-CHRAC1 heterodimer; the interaction is direct and is required for the complex to preferentially bind to DNA. Within the complex interacts with SMARCA5/SNF2H; the interaction is direct and promotes the interaction with the POLE3-CHRAC1 heterodimer. Interacts with NCOR1 (via its RD1 domain); the interaction corepresses a number of NCOR1-regulated genes. In terms of tissue distribution, highly expressed in testis and at low or undetectable levels in other tissues analyzed.

It localises to the nucleus. Its function is as follows. Regulatory subunit of the ATP-dependent ACF-1 and ACF-5 ISWI chromatin remodeling complexes, which form ordered nucleosome arrays on chromatin and slide edge- and center-positioned histone octamers away from their original location on the DNA template to facilitate access to DNA during DNA-templated processes such as DNA replication, transcription, and repair. Both complexes regulate the spacing of nucleosomes along the chromatin and have the ability to slide mononucleosomes to the center of a DNA template in an ATP-dependent manner. The ACF-1 ISWI chromatin remodeling complex has a lower ATP hydrolysis rate than the ACF-5 ISWI chromatin remodeling complex. Has a role in sensing the length of DNA which flank nucleosomes, which modulates the nucleosome spacing activity of the ACF-5 ISWI chromatin remodeling complex. Involved in DNA replication and together with SMARCA5/SNF2H is required for replication of pericentric heterochromatin in S-phase. May have a role in nuclear receptor-mediated transcription repression. The chain is Bromodomain adjacent to zinc finger domain protein 1A (BAZ1A) from Homo sapiens (Human).